Reading from the N-terminus, the 629-residue chain is Dual specificity tyrosine-phosphorylation-regulated kinase 1B (629 aa).

Residue Tyr63 is modified to Phosphotyrosine. The segment at 67 to 86 is disordered; sequence KKRRAQQAPPQDSSTKKEKK. Residues 69 to 86 carry the Bipartite nuclear localization signal motif; sequence RRAQQAPPQDSSTKKEKK. Residues Tyr92 and Tyr111 each carry the phosphotyrosine modification. Residues 111-431 enclose the Protein kinase domain; it reads YEIDSLIGKG…PLGALQHGFF (321 aa). 117–125 provides a ligand contact to ATP; sequence IGKGSFGQV. The residue at position 129 (Tyr129) is a Phosphotyrosine. Lys140 provides a ligand contact to ATP. Residue Tyr171 is modified to Phosphotyrosine. Residue 190–193 participates in ATP binding; that stretch reads FELL. Asp239 serves as the catalytic Proton acceptor. At Ser262 the chain carries Phosphoserine. At Tyr271 the chain carries Phosphotyrosine; by autocatalysis. Residue Tyr273 is modified to Phosphotyrosine. Positions 380-399 are disordered; it reads GVQTGGPGGRRAGEPGHSPA. Tyr401 carries the phosphotyrosine modification. Disordered stretches follow at residues 436-480 and 496-629; these read DEAT…SNDN and PITD…AASS. Over residues 438-477 the composition is skewed to low complexity; it reads ATNTGPAGSSASTSPAPLDTCPSSSTASSISSSGGSSGSS. Residues 480-520 form an interaction with RANBP9 region; the sequence is NRAYRYSNRYCGGPGPPITDCEMNSPQVLPSQPLRPWAGGD. Pro residues-rich tracts occupy residues 552 to 562 and 574 to 585; these read PPSPTSPPPPE and DCSPPPPAPAPQ. At Ser624 the chain carries Phosphoserine.

The protein belongs to the protein kinase superfamily. CMGC Ser/Thr protein kinase family. MNB/DYRK subfamily. As to quaternary structure, dimer. Interacts with DCOHM, MAP2K3/MKK3, RANBP9 and TCF1/HNF1A. Part of a complex consisting of RANBP9, RAN, DYRK1B and COPS5. Interacts with DCAF7. Interacts with RNF169. Post-translationally, phosphorylated by MAP kinase. Tyrosine phosphorylation may be required for dimerization. In terms of tissue distribution, isoform 1 and isoform 2 are broadly expressed. Isoform 3 seems specific for skeletal muscle (at protein level).

It localises to the nucleus. The protein resides in the nucleolus. It is found in the chromosome. It catalyses the reaction L-seryl-[protein] + ATP = O-phospho-L-seryl-[protein] + ADP + H(+). The enzyme catalyses L-threonyl-[protein] + ATP = O-phospho-L-threonyl-[protein] + ADP + H(+). It carries out the reaction L-tyrosyl-[protein] + ATP = O-phospho-L-tyrosyl-[protein] + ADP + H(+). Its activity is regulated as follows. Inhibited by RANBP9. Functionally, dual-specificity kinase which possesses both serine/threonine and tyrosine kinase activities. Plays an essential role in ribosomal DNA (rDNA) double-strand break repair and rDNA copy number maintenance. During DNA damage, mediates transcription silencing in part via phosphorylating and enforcing DSB accumulation of the histone methyltransferase EHMT2. Enhances the transcriptional activity of TCF1/HNF1A and FOXO1. Inhibits epithelial cell migration. Mediates colon carcinoma cell survival in mitogen-poor environments. Inhibits the SHH and WNT1 pathways, thereby enhancing adipogenesis. In addition, promotes expression of the gluconeogenic enzyme glucose-6-phosphatase catalytic subunit 1 (G6PC1). The sequence is that of Dual specificity tyrosine-phosphorylation-regulated kinase 1B (Dyrk1b) from Mus musculus (Mouse).